Reading from the N-terminus, the 722-residue chain is DUF724 domain-containing protein 7 (722 aa).

Residues 424–449 (KTTPKKKLQAMKNQKSSTNDSVGEKV) form a disordered region. A compositionally biased stretch (polar residues) spans 434 to 444 (MKNQKSSTNDS). Residues 540 to 720 (VLPFVKKSQL…HEFQAILAAP (181 aa)) form the DUF724 domain. Residues 645–712 (CALEELKAVE…DQEVQNVDHE (68 aa)) adopt a coiled-coil conformation.

Homodimer. Interacts wtih ABAP1, ARIA and LHP1. Interacts with the non-modified histones H1, H2B, H3 and H4. As to expression, expressed in roots, leaves, stems and flowers.

Its subcellular location is the nucleus. In terms of biological role, may act as a link between DNA replication, transcription and chromatin remodeling during flower development. May participate in the repression of LHP1-targeted genes during flower development by direct interaction with LHP1. May be involved in the polar growth of plant cells via transportation of RNAs. The polypeptide is DUF724 domain-containing protein 7 (Arabidopsis thaliana (Mouse-ear cress)).